Here is a 397-residue protein sequence, read N- to C-terminus: Mannitol-1-phosphate 5-dehydrogenase (397 aa).

9-20 is a binding site for NAD(+); sequence AVHFGAGNIGRG. Lys-220 is a catalytic residue.

This sequence belongs to the mannitol dehydrogenase family. Monomer.

It carries out the reaction D-mannitol 1-phosphate + NAD(+) = beta-D-fructose 6-phosphate + NADH + H(+). Catalyzes the NAD(H)-dependent interconversion of D-fructose 6-phosphate and D-mannitol 1-phosphate in the mannitol metabolic pathway. The polypeptide is Mannitol-1-phosphate 5-dehydrogenase (Podospora anserina (strain S / ATCC MYA-4624 / DSM 980 / FGSC 10383) (Pleurage anserina)).